Consider the following 132-residue polypeptide: MRKIISMLFIPLFIFAMAEPAGAPPEVKNIKILVLDRAGKKHELKSPLCEGLSYLKVKHGGIEYSVSLTSLEEIEVLSVSGDVAKIKLKYKNGKEEIFDISANTLCTGTSDFGNASFYLKDVQKILFRRGEK.

Positions M1–A18 are cleaved as a signal peptide.

This is an uncharacterized protein from Aquifex aeolicus (strain VF5).